We begin with the raw amino-acid sequence, 201 residues long: Putative manganese efflux pump MntP (201 aa).

A run of 6 helical transmembrane segments spans residues 3-23 (LVSI…VSIT), 39-59 (IGLF…SIGI), 65-85 (IAAL…GKMI), 116-136 (LTLL…SFAF), 141-161 (IINT…IGVM), and 176-196 (ILGG…HTNI).

Belongs to the MntP (TC 9.B.29) family.

Its subcellular location is the cell membrane. Probably functions as a manganese efflux pump. This is Putative manganese efflux pump MntP from Clostridium botulinum (strain Loch Maree / Type A3).